The primary structure comprises 129 residues: MKYFVVXXALVAAFACIAESKPAESEHELAEVEEENELADLEDAVWLEDLADLSDLEETRGFFGNAWKKIKGKAEKFFRKKAAKIIAKKEGITKEEAEAKVDPMSKKQIKVYLLKHYGKKALQKASEKL.

An N-terminal signal peptide occupies residues 1–20; that stretch reads MKYFVVXXALVAAFACIAES. The propeptide occupies 21-60; it reads KPAESEHELAEVEEENELADLEDAVWLEDLADLSDLEETR.

This sequence belongs to the cationic peptide 06 (cytoinsectotoxin) family. In terms of tissue distribution, expressed by the venom gland.

The protein resides in the secreted. In terms of biological role, insecticidal, cytolytic and antimicrobial peptide. Forms voltage-dependent, ion-permeable channels in membranes. At high concentration causes cell membrane lysis. In Lachesana tarabaevi (Spider), this protein is M-zodatoxin-Lt8l (cit 1-12).